The primary structure comprises 288 residues: Ribosomal RNA small subunit methyltransferase A (288 aa).

6 residues coordinate S-adenosyl-L-methionine: N18, L20, G45, E66, D91, and N118.

Belongs to the class I-like SAM-binding methyltransferase superfamily. rRNA adenine N(6)-methyltransferase family. RsmA subfamily.

The protein localises to the cytoplasm. The enzyme catalyses adenosine(1518)/adenosine(1519) in 16S rRNA + 4 S-adenosyl-L-methionine = N(6)-dimethyladenosine(1518)/N(6)-dimethyladenosine(1519) in 16S rRNA + 4 S-adenosyl-L-homocysteine + 4 H(+). Its function is as follows. Specifically dimethylates two adjacent adenosines (A1518 and A1519) in the loop of a conserved hairpin near the 3'-end of 16S rRNA in the 30S particle. May play a critical role in biogenesis of 30S subunits. This is Ribosomal RNA small subunit methyltransferase A from Mannheimia succiniciproducens (strain KCTC 0769BP / MBEL55E).